The chain runs to 214 residues: MPSYTLHYFNHRGRARSAVCCSQLLVSSTMTADRVFRMGQHEKQDAMSHDANVGIGQQNPNSPEYAMARYLAREFGFHGRNNMEMARVDFISDCFYDILDDYMRMYQDGNCRMMFQRSRDMSSSSEKRMRFQETCRRILPFMERTLEMYNGGSQYFMGDQMTMADMMCYCALENPLMEEPSMLSSYPKLMALRNRVMNHSKMSSYLQRRCRTDF.

The 78-residue stretch at 2–79 folds into the GST N-terminal domain; sequence PSYTLHYFNH…YLAREFGFHG (78 aa). The GST C-terminal domain maps to 81 to 214; it reads NNMEMARVDF…YLQRRCRTDF (134 aa).

This sequence belongs to the GST superfamily. In terms of tissue distribution, lens.

In terms of biological role, S-crystallins are structural components of squids and octopi eye lens. Contains relatively little GST activity (1/1000 of that of mammalian GST enzyme). This Octopus vulgaris (Common octopus) protein is S-crystallin 1 (OCTS1).